We begin with the raw amino-acid sequence, 660 residues long: MKIIYQEQPNECGICVLGMLANELHEDKYAHDELLEQINLPASGLSFFELETYGKKFGLEIASYQLTLEELKQLEGKYFIVHFPKHFVVVHKKQDNLWEVFDPAKGKYLLNDEELKKQWTGYAATVQKSFKEIPPINKRNFFKHFFDLNLIIFYVFIELIIIGISTLLATASKTMIANTVDFGTSVNIVVFVVFFLVLKGLYLLLYALLQMVRNVLFWKQYRGYLGWIMQTLQTKSFVYFSNKSPNQLTERQFYLKEVLSFFNVHIPNLIISCTVALIIGTLIGINQMEFLWIAIVQIVVNCAIFLYDFFFTKRITKQAIPQMELQNKVSLQLDGNLRDEQNGKRFNYLMMQLRKALIKNQNISNQKEVNHLASDGVKSFAQQVFDFLILALGIIGIIEQRYTLAFLFYIFSIQALFSAYATRIIQFGAAVNLYQFCKDKLVTLFEDKVNDCNFKVSWKCPKVINLNNCSITLNQNLDLANLNLNLTNGMVISGENGSGKSTLLKILTGRGLSYQGQIKLDELDLKDFSASQLFHNVYYLTGQLTAYNDITDFGYSEALLNCKNPQVYQLLADTGIHNQIKLSSGQKQILQLFLLQNLKDKVILLDETLNAIATELKPRVYQLLIKPLTYNNFVLMVEHDLRFVNSEQDLINLSPYLQQT.

The Peptidase C39 domain maps to 6 to 126; sequence QEQPNECGIC…KQWTGYAATV (121 aa). The active site involves Cys-12. 6 helical membrane passes run 150 to 170, 188 to 208, 265 to 285, 290 to 310, 379 to 399, and 402 to 422; these read LIIF…LLAT, IVVF…LYAL, HIPN…LIGI, FLWI…YDFF, SFAQ…GIIE, and YTLA…AYAT. An ABC transporter domain is found at 464–660; the sequence is INLNNCSITL…INLSPYLQQT (197 aa). 494–501 contributes to the ATP binding site; sequence GENGSGKS.

It belongs to the ABC transporter superfamily.

It localises to the cell membrane. The sequence is that of Putative ABC transporter ATP-binding MG390 homolog from Mycoplasma pneumoniae (strain ATCC 29342 / M129 / Subtype 1) (Mycoplasmoides pneumoniae).